Consider the following 123-residue polypeptide: Large ribosomal subunit protein uL14 (123 aa).

This sequence belongs to the universal ribosomal protein uL14 family. As to quaternary structure, part of the 50S ribosomal subunit. Forms a cluster with proteins L3 and L19. In the 70S ribosome, L14 and L19 interact and together make contacts with the 16S rRNA in bridges B5 and B8.

Binds to 23S rRNA. Forms part of two intersubunit bridges in the 70S ribosome. In Blochmanniella pennsylvanica (strain BPEN), this protein is Large ribosomal subunit protein uL14.